A 92-amino-acid polypeptide reads, in one-letter code: Precursor of CEP12 (92 aa).

The signal sequence occupies residues M1–A30. Residues A31–T70 constitute a propeptide that is removed on maturation. The interval T70–P92 is disordered. A hydroxyproline mark is found at P74 and P79. Positions K86–P92 are excised as a propeptide.

Belongs to the C-terminally encoded plant signaling peptide (CEP) family. Interacts with CEP receptors (e.g. CEPR1 and CEPR2). Post-translationally, the mature small signaling peptide is generated by proteolytic processing of the longer precursor.

Its subcellular location is the secreted. It is found in the extracellular space. The protein localises to the apoplast. Functionally, extracellular signaling peptide that may regulate primary root growth rate and systemic nitrogen (N)-demand signaling. This is Precursor of CEP12 from Arabidopsis thaliana (Mouse-ear cress).